The chain runs to 123 residues: Fluoride-specific ion channel FluC 2 (123 aa).

The next 2 helical transmembrane spans lie at 1–21 (MTML…FLLD) and 30–50 (VPVP…LGLI). Na(+) contacts are provided by Gly-74 and Thr-77. A helical transmembrane segment spans residues 99–119 (ALHCMGMAIAGVLAAILGLAL).

Belongs to the fluoride channel Fluc/FEX (TC 1.A.43) family.

Its subcellular location is the cell membrane. It catalyses the reaction fluoride(in) = fluoride(out). Its activity is regulated as follows. Na(+) is not transported, but it plays an essential structural role and its presence is essential for fluoride channel function. Its function is as follows. Fluoride-specific ion channel. Important for reducing fluoride concentration in the cell, thus reducing its toxicity. The protein is Fluoride-specific ion channel FluC 2 of Cutibacterium acnes (strain DSM 16379 / KPA171202) (Propionibacterium acnes).